Here is a 376-residue protein sequence, read N- to C-terminus: Lipid-A-disaccharide synthase (376 aa).

This sequence belongs to the LpxB family.

The enzyme catalyses a lipid X + a UDP-2-N,3-O-bis[(3R)-3-hydroxyacyl]-alpha-D-glucosamine = a lipid A disaccharide + UDP + H(+). It participates in bacterial outer membrane biogenesis; LPS lipid A biosynthesis. In terms of biological role, condensation of UDP-2,3-diacylglucosamine and 2,3-diacylglucosamine-1-phosphate to form lipid A disaccharide, a precursor of lipid A, a phosphorylated glycolipid that anchors the lipopolysaccharide to the outer membrane of the cell. This chain is Lipid-A-disaccharide synthase, found in Coxiella burnetii (strain Dugway 5J108-111).